The primary structure comprises 225 residues: Membrane protein (225 aa).

Over 1-20 (MSNETNCTLDFEQSVELFKE) the chain is Virion surface. A helical transmembrane segment spans residues 21-41 (YNLFITAFLLFLTIILQYGYA). Topologically, residues 42–51 (TRSKFIYILK) are intravirion. The chain crosses the membrane as a helical span at residues 52–72 (MIVLWCFWPLNIAVGVISCIY). Over 73–77 (PPNTG) the chain is Virion surface. Residues 78–98 (GLVAAIILTVFACLSFVGYWI) form a helical membrane-spanning segment. The Intravirion segment spans residues 99-225 (QSIRLFKRCR…VATGGSSLYT (127 aa)).

It belongs to the gammacoronaviruses M protein family. Homomultimer. Interacts with envelope E protein in the budding compartment of the host cell, which is located between endoplasmic reticulum and the Golgi complex. Forms a complex with HE and S proteins. Interacts with nucleocapsid N protein. This interaction probably participates in RNA packaging into the virus.

It localises to the virion membrane. The protein resides in the host Golgi apparatus membrane. Its function is as follows. Component of the viral envelope that plays a central role in virus morphogenesis and assembly via its interactions with other viral proteins. The polypeptide is Membrane protein (Gallus gallus (Chicken)).